A 256-amino-acid chain; its full sequence is 5-keto-4-deoxy-D-glucarate aldolase (256 aa).

The Proton acceptor role is filled by H50. Residue Q151 coordinates substrate. E153 contributes to the Mg(2+) binding site. The substrate site is built by S178 and D179. A Mg(2+)-binding site is contributed by D179.

Belongs to the HpcH/HpaI aldolase family. KDGluc aldolase subfamily. As to quaternary structure, homohexamer; trimer of dimers. The cofactor is Mg(2+).

It carries out the reaction 5-dehydro-4-deoxy-D-glucarate = 2-hydroxy-3-oxopropanoate + pyruvate. The catalysed reaction is 2-dehydro-3-deoxy-D-glucarate = 2-hydroxy-3-oxopropanoate + pyruvate. It functions in the pathway carbohydrate acid metabolism; galactarate degradation; D-glycerate from galactarate: step 2/3. Functionally, catalyzes the reversible retro-aldol cleavage of both 5-keto-4-deoxy-D-glucarate and 2-keto-3-deoxy-D-glucarate to pyruvate and tartronic semialdehyde. The protein is 5-keto-4-deoxy-D-glucarate aldolase of Enterobacter sp. (strain 638).